Here is a 187-residue protein sequence, read N- to C-terminus: Major allergen Equ c 1 (187 aa).

The or 16, or 21 signal peptide spans 1 to 15 (MKLLLLCLGLILVCA). N-linked (GlcNAc...) asparagine glycosylation is found at asparagine 53 and asparagine 68. A disulfide bridge links cysteine 83 with cysteine 176.

The protein belongs to the calycin superfamily. Lipocalin family. In terms of assembly, homodimer. Post-translationally, several N-terminal ends may be due to cleavage by signal peptidase at different sites or may be generated by proteolytic processing of the secreted protein. In terms of processing, analysis of the sugar composition shows the presence of GalNAc, Gal, NeuAc, GlcNAc, and Man. May be also O-glycosylated. As to expression, expressed in liver and in sublingual and submaxillary salivary glands. Highly concentrated in secretory fluid such as saliva and urine as well as in hair dandruff extract.

It is found in the secreted. This chain is Major allergen Equ c 1, found in Equus caballus (Horse).